Here is a 703-residue protein sequence, read N- to C-terminus: Centrosomal protein of 63 kDa (703 aa).

Position 1 is an N-acetylmethionine (methionine 1). Coiled-coil stretches lie at residues 22 to 199, 242 to 306, 353 to 533, and 676 to 703; these read EAEL…ESVE, MTVL…QHAV, LEGS…STQM, and HILE…TALK. Serine 278 carries the phosphoserine modification.

Belongs to the CEP63 family. As to quaternary structure, interacts with CEP152 and CDK1; these interactions recruit both ligands to centrosomes. Interacts with CDK2, CDK5RAP2, WDR62, CEP90, KIAA0753/moonraker and CCDC14. CEP63, CDK5RAP2, CEP152, WDR62 are proposed to form a stepwise assembled complex at the centrosome forming a ring near parental centrioles. Interacts with CCDC57; the interaction is required for their location to proximal end of centrioles. Interacts with FXR1; promoting its stabilization. (Microbial infection) Interacts with zika virus serine protease NS3; this interaction disorganizes the centrosome. Post-translationally, polyubiquitinated via 'Lys-48'-linked ubiquitin, leading to its degradation. Deubiquitinated by USP36, promoting its stabilization.

It is found in the cytoplasm. Its subcellular location is the cytoskeleton. The protein localises to the microtubule organizing center. The protein resides in the centrosome. It localises to the centriole. It is found in the centriolar satellite. In terms of biological role, required for normal spindle assembly. Plays a key role in mother-centriole-dependent centriole duplication; the function seems also to involve CEP152, CDK5RAP2 and WDR62 through a stepwise assembled complex at the centrosome that recruits CDK2 required for centriole duplication. Reported to be required for centrosomal recruitment of CEP152; however, this function has been questioned. Also recruits CDK1 to centrosomes. Plays a role in DNA damage response. Following DNA damage, such as double-strand breaks (DSBs), is removed from centrosomes; this leads to the inactivation of spindle assembly and delay in mitotic progression. Promotes stabilization of FXR1 protein by inhibiting FXR1 ubiquitination. This Homo sapiens (Human) protein is Centrosomal protein of 63 kDa.